A 193-amino-acid polypeptide reads, in one-letter code: MAAVLNLQLKVDADLKAFLAAEGRPLHGKTGAILEQTLEAIFANIAIQGTSEQTEFLDVLVEVKSMEDQKVVGSFNLKEVVGLIKIFRTTSSDPNISSMTFRQVCEAFAPEARNGLVKLKYKGVFTNLFSTTPEVGGKYPELMFDFNKGLNMFIMNKAQQKVITNMNRRLLQTEFAKSENEAKMSSVTTDLCV.

It localises to the virion. The sequence is that of Capsid protein from Apple chlorotic leaf spot virus (isolate apple) (ACLSV).